Consider the following 451-residue polypeptide: Heme sensor protein HssS (451 aa).

Helical transmembrane passes span 9 to 29 (IAIY…LFTN) and 164 to 184 (IFLA…VIAS). The HAMP domain occupies 186–238 (YSIIKPVTALKNATTRIMKGDFSTPIKQTRHDEIGTLQSRFNTMRQNLGQVDQ). Residues 246-451 (NVSHEIKTPL…KTQFIVKLFI (206 aa)) enclose the Histidine kinase domain. At histidine 249 the chain carries Phosphohistidine; by autocatalysis.

Autophosphorylated.

The protein localises to the cell membrane. It catalyses the reaction ATP + protein L-histidine = ADP + protein N-phospho-L-histidine.. Functionally, member of the two-component regulatory system HssS/HssR involved in intracellular heme homeostasis and tempering of staphylococcal virulence. HssS functions as a heme sensor histidine kinase which is autophosphorylated at a histidine residue and transfers its phosphate group to an aspartate residue of HssR. HssR/HssS activates the expression of HrtAB, an efflux pump, in response to extracellular heme, hemin, hemoglobin or blood. The sequence is that of Heme sensor protein HssS (hssS) from Staphylococcus epidermidis (strain ATCC 12228 / FDA PCI 1200).